The chain runs to 355 residues: MDDNKKRALAAALGQIERQFGKGAVMRMGDHERQAIPAISTGSLGLDIALGIGGLPKGRIVEIYGPESSGKTTLTLSVIAEAQKNGATCAFVDAEHALDPEYAGKLGVNVDDLLVSQPDTGEQALEITDMLVRSNAVDVIIVDSVAALVPKAEIEGEMGDMHVGLQARLMSQALRKITGNIKNANCLVIFINQIRMKIGVMFGSPETTTGGNALKFYASVRLDIRRTGAVKEGDEVVGSETRVKIVKNKVSPPFRQAEFQILYGKGIYRNGEIIDLGVSQGLVEKSGAWYAYQGNKIGQGKANAAKYLAENPAIGAEIEKQIRDKLLTSGAVAAAGKAAAVEADADDMADADAGY.

ATP is bound at residue 65–72; it reads GPESSGKT.

Belongs to the RecA family.

It is found in the cytoplasm. In terms of biological role, can catalyze the hydrolysis of ATP in the presence of single-stranded DNA, the ATP-dependent uptake of single-stranded DNA by duplex DNA, and the ATP-dependent hybridization of homologous single-stranded DNAs. It interacts with LexA causing its activation and leading to its autocatalytic cleavage. The chain is Protein RecA from Pseudomonas putida (Arthrobacter siderocapsulatus).